The chain runs to 1435 residues: Sterol 3-beta-glucosyltransferase (1435 aa).

Disordered stretches follow at residues 1 to 26 (MAPD…HQVA), 75 to 107 (SDEE…KFEG), 123 to 169 (RFSS…KDTP), and 185 to 206 (PSFE…RTSP). The span at 85–99 (TRQSSESHINRSSID) shows a compositional bias: polar residues. Low complexity predominate over residues 123-133 (RFSSRSKSKSS). Residues 134–143 (NTIARGSRTP) show a composition bias toward polar residues. A compositionally biased stretch (basic and acidic residues) spans 189 to 206 (MPRKSKDPAEVDDERTSP). One can recognise a GRAM 1 domain in the interval 211-258 (ERLMEIFKFETPEDVLEEYPCWLMKSVLLQGYMYITTKHICFYAYLPK). The PH domain occupies 262–360 (EVVKSGYLSK…WVKALQKIIF (99 aa)). 4 disordered regions span residues 444–477 (LSTA…PNAP), 527–594 (DLNR…QASA), 610–671 (QHSP…QAEI), and 727–759 (GKKH…ATPA). The span at 527–537 (DLNRLTTEHHR) shows a compositional bias: basic and acidic residues. Composition is skewed to polar residues over residues 539 to 554 (NSAN…STNR), 628 to 647 (KSRS…TRTQ), and 657 to 671 (TTGS…QAEI). Over residues 729–742 (KHYEEPHGIPRDNE) the composition is skewed to basic and acidic residues. The GRAM 2 domain occupies 760–826 (DRFRDHFALP…KDIENVDKEK (67 aa)). 10 residues coordinate UDP-alpha-D-glucose: S949, R950, D952, A1252, H1254, H1267, G1271, T1272, D1291, and Q1292.

It belongs to the glycosyltransferase 28 family.

It is found in the cytoplasm. The protein localises to the preautophagosomal structure membrane. It catalyses the reaction a sterol + UDP-alpha-D-glucose = a sterol 3-beta-D-glucoside + UDP + H(+). The catalysed reaction is ergosterol + UDP-alpha-D-glucose = ergosteryl 3-beta-D-glucoside + UDP + H(+). Its function is as follows. Sterol glycosyltransferase responsible for the glycosylation of ergosterol to form ergosterol-glucoside. In Sclerotinia sclerotiorum (strain ATCC 18683 / 1980 / Ss-1) (White mold), this protein is Sterol 3-beta-glucosyltransferase.